Reading from the N-terminus, the 328-residue chain is 4-hydroxythreonine-4-phosphate dehydrogenase (328 aa).

The substrate site is built by histidine 135 and threonine 136. Histidine 165, histidine 210, and histidine 265 together coordinate a divalent metal cation. 3 residues coordinate substrate: lysine 273, asparagine 282, and arginine 291.

The protein belongs to the PdxA family. In terms of assembly, homodimer. It depends on Zn(2+) as a cofactor. Mg(2+) is required as a cofactor. The cofactor is Co(2+).

It is found in the cytoplasm. It carries out the reaction 4-(phosphooxy)-L-threonine + NAD(+) = 3-amino-2-oxopropyl phosphate + CO2 + NADH. Its pathway is cofactor biosynthesis; pyridoxine 5'-phosphate biosynthesis; pyridoxine 5'-phosphate from D-erythrose 4-phosphate: step 4/5. Functionally, catalyzes the NAD(P)-dependent oxidation of 4-(phosphooxy)-L-threonine (HTP) into 2-amino-3-oxo-4-(phosphooxy)butyric acid which spontaneously decarboxylates to form 3-amino-2-oxopropyl phosphate (AHAP). In Enterobacter sp. (strain 638), this protein is 4-hydroxythreonine-4-phosphate dehydrogenase.